The chain runs to 228 residues: UPF0758 protein CKR_0778 (228 aa).

One can recognise an MPN domain in the interval R106 to L228. 3 residues coordinate Zn(2+): H177, H179, and D190. Residues H177–D190 carry the JAMM motif motif.

The protein belongs to the UPF0758 family.

This Clostridium kluyveri (strain NBRC 12016) protein is UPF0758 protein CKR_0778.